We begin with the raw amino-acid sequence, 484 residues long: uncharacterized protein (484 aa).

In terms of domain architecture, FAD-binding PCMH-type spans 47-226; the sequence is TLPIPAAVVK…TEVTVKIFKF (180 aa).

It belongs to the FAD-binding oxidoreductase/transferase type 4 family.

This is an uncharacterized protein from Escherichia coli (strain K12).